Reading from the N-terminus, the 203-residue chain is MTKVKICGITTVEDALMAIEAGADALGFVFYDKSPRNIIPERAAEIIGSLPPFIHVVGLFVHAHLDFVNATADRCRLDIVQLHGDESREFCSRVNRRVIKAFRVKDITSLDRMEEYRVAGYLLDAYSPKAFGGTGITFNWDTAVVAKKFGPIILAGGLTPDNVTEAIGHVSPYGVDVSSGVESAPGVKDPAKVREFIKRAKGL.

This sequence belongs to the TrpF family.

It carries out the reaction N-(5-phospho-beta-D-ribosyl)anthranilate = 1-(2-carboxyphenylamino)-1-deoxy-D-ribulose 5-phosphate. Its pathway is amino-acid biosynthesis; L-tryptophan biosynthesis; L-tryptophan from chorismate: step 3/5. The chain is N-(5'-phosphoribosyl)anthranilate isomerase from Geotalea uraniireducens (strain Rf4) (Geobacter uraniireducens).